A 349-amino-acid chain; its full sequence is Cell adhesion molecule CEACAM8 (349 aa).

Positions 1–34 (MGPISAPSCRWRIPWQGLLLTASLFTFWNPPTTA) are cleaved as a signal peptide. The Ig-like V-type domain maps to 35–142 (QLTIEAVPSN…EVTGQFSVHP (108 aa)). N-linked (GlcNAc...) asparagine glycans are attached at residues N104, N111, N115, N152, N173, N197, N224, N256, N274, N288, and N309. Ig-like C2-type domains lie at 145-232 (PKPS…VTLN) and 237-319 (PDAP…ITVS). C167 and C215 are disulfide-bonded. A disulfide bridge links C259 with C299. Residue D320 is the site of GPI-anchor amidated aspartate attachment. Residues 321–349 (ALVQGSSPGLSARATVSIMIGVLARVALI) constitute a propeptide, removed in mature form.

The protein belongs to the immunoglobulin superfamily. CEA family. Monomer. Heterodimer with CEACAM6; heterodimerizes via its Ig-like V-type domain. Post-translationally, glycosylated. Expressed in leukocytes of chronic myeloid Leukemia patients and bone marrow.

It is found in the cell membrane. The protein resides in the cell surface. Cell surface glycoprotein that plays a role in cell adhesion in a calcium-independent manner. Mediates heterophilic cell adhesion with other carcinoembryonic antigen-related cell adhesion molecules, such as CEACAM6. Heterophilic interaction with CEACAM8 occurs in activated neutrophils. This is Cell adhesion molecule CEACAM8 from Homo sapiens (Human).